A 452-amino-acid chain; its full sequence is Probable multidrug resistance protein NorM (452 aa).

12 helical membrane passes run 12-34 (RQFL…ITVL), 49-71 (GVAI…LTAV), 91-113 (VIQS…YFLI), 128-150 (VIAK…YNVM), 162-184 (VTML…FIFG), 194-216 (AGAG…YIVH), 245-267 (GIPI…LLMS), 282-304 (NFAS…VVGF), 317-339 (YSYL…ILLF), 359-381 (DFLL…QGAL), 388-410 (NYTL…FVIG), and 415-437 (FGAF…GLFF).

The protein belongs to the multi antimicrobial extrusion (MATE) (TC 2.A.66.1) family.

It localises to the cell membrane. Functionally, multidrug efflux pump. In Bacillus licheniformis (strain ATCC 14580 / DSM 13 / JCM 2505 / CCUG 7422 / NBRC 12200 / NCIMB 9375 / NCTC 10341 / NRRL NRS-1264 / Gibson 46), this protein is Probable multidrug resistance protein NorM (norM).